The following is a 315-amino-acid chain: MGRKRKHSETVTAAPVKDSAPERPQRTLLGWKDKKEDAENSKPAYASVFRNKEKVLVTCSRRINFRYRHLMLNMVSLLPHCKKDSKVEAKSSRGATLNELIELKGSSSCLFFECRKHKDLYMWMVKSPGGPSVKFLVNAVHTMEELKLTGNHLKGSRPLLTFSSNFENDAHWKLLKEMLTQIFGIPEGHRKSKPYHDHVFVFSIVDDHIWFRNYQISVPHNESDKIARGDLDKMTLIEVGPRFCLNPIKIFGGSFGGTTLYENPFYVSPNQIRALEKRNKAGKFAKKIKAKTRRKMHELSNPLEPDEFTDMWNDE.

Positions 1-35 (MGRKRKHSETVTAAPVKDSAPERPQRTLLGWKDKK) are disordered. Residues 19 to 35 (SAPERPQRTLLGWKDKK) are compositionally biased toward basic and acidic residues. Residues 53 to 256 (EKVLVTCSRR…PIKIFGGSFG (204 aa)) enclose the Brix domain.

The protein belongs to the BRX1 family. As to expression, expressed in roots, rosette leaves, stems, flowers, siliques and seeds.

It is found in the nucleus. The protein resides in the nucleolus. Its function is as follows. Involved in pre-rRNA processing and required for biogenesis of the large (60S) ribosomal subunit. Required for proper development. This chain is Ribosome biogenesis protein BRX1 homolog 1, found in Arabidopsis thaliana (Mouse-ear cress).